Here is a 134-residue protein sequence, read N- to C-terminus: Endoribonuclease YbeY (134 aa).

The Zn(2+) site is built by H94, H98, and H104.

Belongs to the endoribonuclease YbeY family. The cofactor is Zn(2+).

Its subcellular location is the cytoplasm. Its function is as follows. Single strand-specific metallo-endoribonuclease involved in late-stage 70S ribosome quality control and in maturation of the 3' terminus of the 16S rRNA. The protein is Endoribonuclease YbeY of Campylobacter jejuni subsp. jejuni serotype O:23/36 (strain 81-176).